Here is a 508-residue protein sequence, read N- to C-terminus: Serum response factor (508 aa).

Over residues 1 to 28 (MLPTQAGAAAALGRGSALGGSLNRTPTG) the composition is skewed to low complexity. Residues 1-97 (MLPTQAGAAA…EEELGAERRG (97 aa)) are disordered. A compositionally biased stretch (gly residues) spans 29 to 53 (RPGGGGGTRGANGGRVPGNGAGLGP). The span at 61 to 80 (AAAAATTPAPTAGALYSGSE) shows a compositional bias: low complexity. 5 positions are modified to phosphoserine: Ser-77, Ser-79, Ser-83, Ser-85, and Ser-103. Positions 81 to 91 (GDSESGEEEEL) are enriched in acidic residues. Residues 133–222 (GAKPGKKTRG…ALIQTCLNSP (90 aa)) mediate DNA binding. The region spanning 141–201 (RGRVKIKMEF…GHVYTFATRK (61 aa)) is the MADS-box domain. Residues 168 to 222 (IMKKAYELSTLTGTQVLLLVASETGHVYTFATRKLQPMITSETGKALIQTCLNSP) form an involved in dimerization region. Residues 219–240 (LNSPDSPPRSDPTTDQRMSATG) form a disordered region. Phosphoserine is present on residues Ser-224 and Ser-253. 5 O-linked (GlcNAc) serine glycosylation sites follow: Ser-277, Ser-307, Ser-309, Ser-316, and Ser-383. A disordered region spans residues 362–385 (VHQAPQQASPSRDSSTDLTQTSSS). 2 positions are modified to phosphoserine; by dsDNA kinase: Ser-435 and Ser-446.

As to quaternary structure, binds DNA as a multimer, probably a dimer. Interacts with MRTFA, forming the SRF-MRTFA nuclear complex which binds the 5'-CArG-3' consensus motif (CArG box) on DNA via SRF. Forms a nuclear ternary complex with MRTFA and SCAI. Interacts with MRTFB. Interacts with MLLT7/FOXO4, NKX3A and SSRP1. Interacts with ARID2. Interacts with SRFBP1. Interacts with FOXK1. Interacts with LPXN. Interacts with OLFM2; the interaction promotes dissociation of SRF from the transcriptional repressor HEY2, facilitates binding of SRF to target genes and promotes smooth muscle differentiation. Interacts with NKX3-1. Interacts with KAT5. Interacts with PURB. Phosphorylated by PRKDC.

The protein resides in the nucleus. Functionally, SRF is a transcription factor that binds to the serum response element (SRE), a short sequence of dyad symmetry located 300 bp to the 5' of the site of transcription initiation of some genes (such as FOS). Together with MRTFA transcription coactivator, controls expression of genes regulating the cytoskeleton during development, morphogenesis and cell migration. The SRF-MRTFA complex activity responds to Rho GTPase-induced changes in cellular globular actin (G-actin) concentration, thereby coupling cytoskeletal gene expression to cytoskeletal dynamics. Required for cardiac differentiation and maturation. The protein is Serum response factor (SRF) of Homo sapiens (Human).